Reading from the N-terminus, the 699-residue chain is Elongation factor G 1 (699 aa).

One can recognise a tr-type G domain in the interval E8–T290. GTP contacts are provided by residues A17–T24, D88–H92, and N142–D145.

Belongs to the TRAFAC class translation factor GTPase superfamily. Classic translation factor GTPase family. EF-G/EF-2 subfamily.

It localises to the cytoplasm. Its function is as follows. Catalyzes the GTP-dependent ribosomal translocation step during translation elongation. During this step, the ribosome changes from the pre-translocational (PRE) to the post-translocational (POST) state as the newly formed A-site-bound peptidyl-tRNA and P-site-bound deacylated tRNA move to the P and E sites, respectively. Catalyzes the coordinated movement of the two tRNA molecules, the mRNA and conformational changes in the ribosome. The polypeptide is Elongation factor G 1 (Hahella chejuensis (strain KCTC 2396)).